The following is a 586-amino-acid chain: Arginine--tRNA ligase (586 aa).

The short motif at 131–141 (ANPTGPMHVGH) is the 'HIGH' region element.

This sequence belongs to the class-I aminoacyl-tRNA synthetase family. As to quaternary structure, monomer.

Its subcellular location is the cytoplasm. It carries out the reaction tRNA(Arg) + L-arginine + ATP = L-arginyl-tRNA(Arg) + AMP + diphosphate. This Rhizobium rhizogenes (strain K84 / ATCC BAA-868) (Agrobacterium radiobacter) protein is Arginine--tRNA ligase.